The following is a 416-amino-acid chain: Glutamyl-tRNA reductase (416 aa).

Residues 49–52 (TCNR), Ser-105, 110–112 (ETQ), and Gln-116 each bind substrate. Cys-50 acts as the Nucleophile in catalysis. 185-190 (GAGEMI) is a binding site for NADP(+).

This sequence belongs to the glutamyl-tRNA reductase family. Homodimer.

It carries out the reaction (S)-4-amino-5-oxopentanoate + tRNA(Glu) + NADP(+) = L-glutamyl-tRNA(Glu) + NADPH + H(+). The protein operates within porphyrin-containing compound metabolism; protoporphyrin-IX biosynthesis; 5-aminolevulinate from L-glutamyl-tRNA(Glu): step 1/2. In terms of biological role, catalyzes the NADPH-dependent reduction of glutamyl-tRNA(Glu) to glutamate 1-semialdehyde (GSA). In Thiobacillus denitrificans (strain ATCC 25259 / T1), this protein is Glutamyl-tRNA reductase.